We begin with the raw amino-acid sequence, 79 residues long: Conotoxin LiCr173 (79 aa).

An N-terminal signal peptide occupies residues 1–20 (MSGLGTMVLTLLLLVFMVTS). Residues 21-46 (HQDGGKKQATQRNAVNIRRRKSITQR) constitute a propeptide that is removed on maturation. 3 disulfides stabilise this stretch: Cys-52–Cys-64, Cys-56–Cys-73, and Cys-63–Cys-77. Phe-78 carries the post-translational modification Phenylalanine amide.

This sequence belongs to the conotoxin O3 superfamily. Expressed by the venom duct.

It localises to the secreted. In Conus lividus (Livid cone), this protein is Conotoxin LiCr173.